We begin with the raw amino-acid sequence, 401 residues long: Jumonji C domain-containing protein 5 (401 aa).

Positions 255 to 401 (EYLAQHELFA…PSFSVSFWWE (147 aa)) constitute a JmjC domain. His306, Asp308, and His385 together coordinate Fe cation.

Requires Fe(2+) as cofactor. In terms of tissue distribution, expressed in neurons close to the dorsal lateral neurons involved in circadian rhythm.

It is found in the nucleus. It localises to the nucleoplasm. Its subcellular location is the cytoplasm. It carries out the reaction L-arginyl-[protein] + 2-oxoglutarate + O2 = (3R)-3-hydroxy-L-arginyl-[protein] + succinate + CO2. Bifunctional enzyme that acts both as an endopeptidase and 2-oxoglutarate-dependent monooxygenase. May be involved in regulation of behavior and circadian rhythms. The chain is Jumonji C domain-containing protein 5 from Drosophila melanogaster (Fruit fly).